Reading from the N-terminus, the 255-residue chain is Imidazole glycerol phosphate synthase subunit HisF (255 aa).

Catalysis depends on residues D12 and D131.

The protein belongs to the HisA/HisF family. As to quaternary structure, heterodimer of HisH and HisF.

It is found in the cytoplasm. The catalysed reaction is 5-[(5-phospho-1-deoxy-D-ribulos-1-ylimino)methylamino]-1-(5-phospho-beta-D-ribosyl)imidazole-4-carboxamide + L-glutamine = D-erythro-1-(imidazol-4-yl)glycerol 3-phosphate + 5-amino-1-(5-phospho-beta-D-ribosyl)imidazole-4-carboxamide + L-glutamate + H(+). It participates in amino-acid biosynthesis; L-histidine biosynthesis; L-histidine from 5-phospho-alpha-D-ribose 1-diphosphate: step 5/9. IGPS catalyzes the conversion of PRFAR and glutamine to IGP, AICAR and glutamate. The HisF subunit catalyzes the cyclization activity that produces IGP and AICAR from PRFAR using the ammonia provided by the HisH subunit. The protein is Imidazole glycerol phosphate synthase subunit HisF of Neisseria gonorrhoeae (strain ATCC 700825 / FA 1090).